A 210-amino-acid chain; its full sequence is Endonuclease III (210 aa).

In terms of domain architecture, HhH spans 108 to 127 (RIELESLPGVGRKTANIILN). 4 residues coordinate [4Fe-4S] cluster: cysteine 187, cysteine 194, cysteine 197, and cysteine 203.

The protein belongs to the Nth/MutY family. Requires [4Fe-4S] cluster as cofactor.

The catalysed reaction is 2'-deoxyribonucleotide-(2'-deoxyribose 5'-phosphate)-2'-deoxyribonucleotide-DNA = a 3'-end 2'-deoxyribonucleotide-(2,3-dehydro-2,3-deoxyribose 5'-phosphate)-DNA + a 5'-end 5'-phospho-2'-deoxyribonucleoside-DNA + H(+). Its function is as follows. DNA repair enzyme that has both DNA N-glycosylase activity and AP-lyase activity. The DNA N-glycosylase activity releases various damaged pyrimidines from DNA by cleaving the N-glycosidic bond, leaving an AP (apurinic/apyrimidinic) site. The AP-lyase activity cleaves the phosphodiester bond 3' to the AP site by a beta-elimination, leaving a 3'-terminal unsaturated sugar and a product with a terminal 5'-phosphate. The sequence is that of Endonuclease III from Buchnera aphidicola subsp. Acyrthosiphon pisum (strain APS) (Acyrthosiphon pisum symbiotic bacterium).